The primary structure comprises 126 residues: Glycine cleavage system H protein (126 aa).

The Lipoyl-binding domain occupies 22–103 (KAYIGITDYA…PYGSWMALVE (82 aa)). K63 bears the N6-lipoyllysine mark.

It belongs to the GcvH family. As to quaternary structure, the glycine cleavage system is composed of four proteins: P, T, L and H. (R)-lipoate is required as a cofactor.

The glycine cleavage system catalyzes the degradation of glycine. The H protein shuttles the methylamine group of glycine from the P protein to the T protein. The polypeptide is Glycine cleavage system H protein (Thermoanaerobacter sp. (strain X514)).